A 278-amino-acid polypeptide reads, in one-letter code: Large ribosomal subunit protein uL2 (278 aa).

The interval 201–278 (HGNINDGKAG…IMRSRHQRKK (78 aa)) is disordered. Over residues 210-221 (GRSRWRGKRPHV) the composition is skewed to basic residues.

The protein belongs to the universal ribosomal protein uL2 family. In terms of assembly, part of the 50S ribosomal subunit. Forms a bridge to the 30S subunit in the 70S ribosome.

One of the primary rRNA binding proteins. Required for association of the 30S and 50S subunits to form the 70S ribosome, for tRNA binding and peptide bond formation. It has been suggested to have peptidyltransferase activity; this is somewhat controversial. Makes several contacts with the 16S rRNA in the 70S ribosome. This is Large ribosomal subunit protein uL2 from Agrobacterium fabrum (strain C58 / ATCC 33970) (Agrobacterium tumefaciens (strain C58)).